We begin with the raw amino-acid sequence, 275 residues long: Phosphonoacetaldehyde hydrolase (275 aa).

Residue Asp-15 is the Nucleophile of the active site. Positions 15 and 17 each coordinate Mg(2+). The active-site Schiff-base intermediate with substrate is Lys-56. Asp-189 contributes to the Mg(2+) binding site.

Belongs to the HAD-like hydrolase superfamily. PhnX family. Homodimer. Mg(2+) is required as a cofactor.

It carries out the reaction phosphonoacetaldehyde + H2O = acetaldehyde + phosphate + H(+). In terms of biological role, involved in phosphonate degradation. The sequence is that of Phosphonoacetaldehyde hydrolase from Pseudomonas putida (strain W619).